A 333-amino-acid polypeptide reads, in one-letter code: Adenosine deaminase (333 aa).

Residues His12 and His14 each contribute to the Zn(2+) site. Substrate contacts are provided by His14, Asp16, and Gly170. A Zn(2+)-binding site is contributed by His197. The active-site Proton donor is the Glu200. Asp278 contacts Zn(2+). Asp279 is a substrate binding site.

It belongs to the metallo-dependent hydrolases superfamily. Adenosine and AMP deaminases family. Adenosine deaminase subfamily. The cofactor is Zn(2+).

The catalysed reaction is adenosine + H2O + H(+) = inosine + NH4(+). It catalyses the reaction 2'-deoxyadenosine + H2O + H(+) = 2'-deoxyinosine + NH4(+). In terms of biological role, catalyzes the hydrolytic deamination of adenosine and 2-deoxyadenosine. This Escherichia coli O45:K1 (strain S88 / ExPEC) protein is Adenosine deaminase.